Here is a 341-residue protein sequence, read N- to C-terminus: MKKYKAGIINVTGYAGLELARILASHPSVELCSVTGRSLAGKKLSDAFPYLHSLDLPITESLEGEVDIAFMALPHKEGASLVPDLLSKGMRVIDISADFRLKDPPLYQAWYGFEHPCPELLAEAVYGLPELKRKDIASARLVANPGCYPTSAILGLAPAFKMDLIEPNAIVDAKSGLSGSGRTPTAKNIFCEASEDVCAYSIGTHRHQPEIVQELSLVGGGVIPRVTFCPHLVPMSRGILSSAYARLKQPVTDEEVKEIYRRFYKDEPFVKITAEPPHTRYTRGTNMCFIYPVVDALNERLIVISCIDNLVKGAAGQAVQNMNIMLGLSEDTGLKAIAALP.

Cysteine 147 is an active-site residue.

It belongs to the NAGSA dehydrogenase family. Type 1 subfamily.

Its subcellular location is the cytoplasm. It catalyses the reaction N-acetyl-L-glutamate 5-semialdehyde + phosphate + NADP(+) = N-acetyl-L-glutamyl 5-phosphate + NADPH + H(+). Its pathway is amino-acid biosynthesis; L-arginine biosynthesis; N(2)-acetyl-L-ornithine from L-glutamate: step 3/4. Catalyzes the NADPH-dependent reduction of N-acetyl-5-glutamyl phosphate to yield N-acetyl-L-glutamate 5-semialdehyde. The protein is N-acetyl-gamma-glutamyl-phosphate reductase of Dehalococcoides mccartyi (strain ATCC BAA-2266 / KCTC 15142 / 195) (Dehalococcoides ethenogenes (strain 195)).